We begin with the raw amino-acid sequence, 278 residues long: UPF0761 membrane protein NT05HA_1801 (278 aa).

The next 6 helical transmembrane spans lie at 32 to 52 (MLAI…FPVF), 88 to 108 (QMSA…INSI), 123 to 143 (PIFT…LLVG), 168 to 188 (LLSF…YMVV), 203 to 223 (LIAA…IVTF), and 232 to 252 (AMAT…FVLL).

The protein belongs to the UPF0761 family.

It localises to the cell inner membrane. The chain is UPF0761 membrane protein NT05HA_1801 from Aggregatibacter aphrophilus (strain NJ8700) (Haemophilus aphrophilus).